Consider the following 74-residue polypeptide: DNA-directed RNA polymerase subunit omega (74 aa).

It belongs to the RNA polymerase subunit omega family. The RNAP catalytic core consists of 2 alpha, 1 beta, 1 beta' and 1 omega subunit. When a sigma factor is associated with the core the holoenzyme is formed, which can initiate transcription.

The enzyme catalyses RNA(n) + a ribonucleoside 5'-triphosphate = RNA(n+1) + diphosphate. Promotes RNA polymerase assembly. Latches the N- and C-terminal regions of the beta' subunit thereby facilitating its interaction with the beta and alpha subunits. This chain is DNA-directed RNA polymerase subunit omega, found in Marinomonas sp. (strain MWYL1).